The sequence spans 440 residues: Xylose isomerase (440 aa).

Catalysis depends on residues His101 and Asp104. The Mg(2+) site is built by Glu232, Glu268, His271, Asp296, Asp307, Asp309, and Asp339.

It belongs to the xylose isomerase family. As to quaternary structure, homotetramer. The cofactor is Mg(2+).

Its subcellular location is the cytoplasm. The enzyme catalyses alpha-D-xylose = alpha-D-xylulofuranose. The sequence is that of Xylose isomerase from Escherichia fergusonii (strain ATCC 35469 / DSM 13698 / CCUG 18766 / IAM 14443 / JCM 21226 / LMG 7866 / NBRC 102419 / NCTC 12128 / CDC 0568-73).